We begin with the raw amino-acid sequence, 312 residues long: MSAAGAADVFHRARGRTLDAFSSEKEREWTGPFYFVQGADPQFGLMKAWSTGNCDNGGDEWGQEIRLTEQAVEAINKLNPKPKFFVLCGDLVHAMPGTRWRKEQTRDLQRVLKVVDQDIPLVLVSGNHDLGNAPTAETVEEFCQTWGDDYFSFWVGGALFLVLNSQFLYDASKCPALKQAQDHWLDQQLSIAEQQQCQHAIVFQHIPLFLKSIDEDDDYFNLTKTVRQELADKFTRAGIRAVFSGHYHRNAGGTYQNLDMVVSSAIGCQLGKDTHGLRVVVVTAEKIVHRYYSLDELSKRGLDDDLRELLKE.

The residue at position 2 (S2) is a Phosphoserine. The interval 47–250 (KAWSTGNCDN…AVFSGHYHRN (204 aa)) is catalytic. D90, N127, and H246 together coordinate a divalent metal cation. Position 293 is a phosphoserine (S293).

It belongs to the metallophosphoesterase superfamily. CPPED1 family. A divalent metal cation is required as a cofactor.

It localises to the cytoplasm. It carries out the reaction O-phospho-L-seryl-[protein] + H2O = L-seryl-[protein] + phosphate. The catalysed reaction is O-phospho-L-threonyl-[protein] + H2O = L-threonyl-[protein] + phosphate. Functionally, protein phosphatase that dephosphorylates AKT family kinase specifically at 'Ser-473', blocking cell cycle progression and promoting cell apoptosis. May play an inhibitory role in glucose uptake by adipocytes. The chain is Serine/threonine-protein phosphatase CPPED1 (Cpped1) from Rattus norvegicus (Rat).